We begin with the raw amino-acid sequence, 219 residues long: MGMSSLKLLKYVLFFFNLLFWICGCCILGFGIYLLIHNNFGVLFHNLPSLTLGNVFVIVGSIIMVVAFLGCMGSIKENKCLLMSFFILLLIILLAEVTLAILLFVYEQKLNEYVAKGLTDSIHRYHSDNSTKAAWDSIQSFLQCCGINGTSDWTSGPPASCPSDRKVEGCYAKARLWFHSNFLYIGIITICVCVIEVLGMSFALTLNCQIDKTSQTIGL.

Residues 1–11 (MGMSSLKLLKY) lie on the Cytoplasmic side of the membrane. Residues 12-32 (VLFFFNLLFWICGCCILGFGI) traverse the membrane as a helical segment. The Extracellular portion of the chain corresponds to 33 to 54 (YLLIHNNFGVLFHNLPSLTLGN). A helical transmembrane segment spans residues 55–69 (VFVIVGSIIMVVAFL). At 70–80 (GCMGSIKENKC) the chain is on the cytoplasmic side. A helical membrane pass occupies residues 81-106 (LLMSFFILLLIILLAEVTLAILLFVY). Residues 107 to 181 (EQKLNEYVAK…AKARLWFHSN (75 aa)) lie on the Extracellular side of the membrane. Residues asparagine 129 and asparagine 148 are each glycosylated (N-linked (GlcNAc...) asparagine). A helical membrane pass occupies residues 182–206 (FLYIGIITICVCVIEVLGMSFALTL). The Cytoplasmic segment spans residues 207-219 (NCQIDKTSQTIGL).

It belongs to the tetraspanin (TM4SF) family. In terms of assembly, interacts with SCIMP. Interacts with CD45/PTPRC. Interacts with IL7R. Interacts with RBL2 and PPP2CA. In terms of tissue distribution, B-cells, monocytes, macrophages, neutrophils, single (CD4 or CD8) positive thymocytes and peripheral T-cells.

The protein resides in the cell membrane. It is found in the cell junction. It localises to the membrane. The protein localises to the synapse. Its function is as follows. Structural component of specialized membrane microdomains known as tetraspanin-enriched microdomains (TERMs), which act as platforms for receptor clustering and signaling. Participates thereby in diverse biological functions such as cell signal transduction, adhesion, migration and protein trafficking. Plays a role in the activation of monocytes and B-cells. Acts as an essential regulator of B-cell development by promoting interleukin-7 receptor/IL7R signaling. Also promotes, in B-cells, the BCR signaling by recruiting PKC to the plasma membrane in order to phosphorylate its substrates. Plays an essential role in B- and T-cells homing to lymph nodes by stabilizing L-selectin/SELL cell surface expression. Also mediates metabolic and inflammatory functions in hepatocytes and adipose tissue by promoting TNF-alpha and LPS signaling independent of the immune compartment. The polypeptide is Leukocyte surface antigen CD53 (CD53) (Homo sapiens (Human)).